The sequence spans 476 residues: Angiotensinogen (476 aa).

Positions 1–24 (MAPAGMSLRATILCLLAWAGLAAG) are cleaved as a signal peptide. N-linked (GlcNAc...) asparagine glycosylation is found at asparagine 38, asparagine 161, asparagine 295, and asparagine 319. Residues cysteine 42 and cysteine 162 are joined by a disulfide bond.

The protein belongs to the serpin family. Post-translationally, in response to low blood pressure, the enzyme renin/REN cleaves angiotensinogen to produce angiotensin-1. Angiotensin-1 is a substrate of ACE (angiotensin converting enzyme) that removes a dipeptide to yield the physiologically active peptide angiotensin-2. Angiotensin-1 and angiotensin-2 can be further processed to generate angiotensin-3, angiotensin-4. Angiotensin 1-9 is cleaved from angiotensin-1 by ACE2 and can be further processed by ACE to produce angiotensin 1-7, angiotensin 1-5 and angiotensin 1-4. Angiotensin 1-7 has also been proposed to be cleaved from angiotensin-2 by ACE2 or from angiotensin-1 by MME (neprilysin). In terms of processing, the disulfide bond is labile. Angiotensinogen is present in the circulation in a near 40:60 ratio with the oxidized disulfide-bonded form, which preferentially interacts with receptor-bound renin.

Its subcellular location is the secreted. Functionally, essential component of the renin-angiotensin system (RAS), a potent regulator of blood pressure, body fluid and electrolyte homeostasis. Its function is as follows. Acts directly on vascular smooth muscle as a potent vasoconstrictor, affects cardiac contractility and heart rate through its action on the sympathetic nervous system, and alters renal sodium and water absorption through its ability to stimulate the zona glomerulosa cells of the adrenal cortex to synthesize and secrete aldosterone. Acts by binding to angiotensin receptors AGTR1 and AGTR2. Also binds the DEAR/FBXW7-AS1 receptor. Stimulates aldosterone release. In terms of biological role, is a ligand for the G-protein coupled receptor MAS1. Has vasodilator and antidiuretic effects. Has an antithrombotic effect that involves MAS1-mediated release of nitric oxide from platelets. This is Angiotensinogen (AGT) from Gorilla gorilla gorilla (Western lowland gorilla).